The following is a 1663-amino-acid chain: Cortactin-binding protein 2 (1663 aa).

Disordered regions lie at residues 1–23 (MATD…AGAA), 203–222 (KKKT…RSTE), 367–440 (GASV…LHPG), 454–478 (GNAN…SPTS), and 498–616 (RFTS…PKPS). The stretch at 119–276 (KKMQERMSAQ…EQLKRGSDSK (158 aa)) forms a coiled coil. The span at 386 to 396 (PSTGSTPDPTS) shows a compositional bias: low complexity. At Arg498 the chain carries Asymmetric dimethylarginine. Residues 583 to 593 (TVASTPSSLPQ) are compositionally biased toward polar residues. ANK repeat units lie at residues 709–739 (GRPT…DINY), 743–772 (DGHS…QVNA), 776–805 (NGFT…NINH), 809–838 (GGQT…NRSV), 842–871 (DGWT…PAHG), and 912–942 (EGWT…EPER). The tract at residues 1449-1482 (KGESGAWRKVNTSPRRKSGRFSLPTWNKPDLSTE) is disordered. Residue Ser1524 is modified to Phosphoserine. A disordered region spans residues 1581–1663 (QKEVSPLSSH…KNEHLEKPNK (83 aa)). Residues 1582–1599 (KEVSPLSSHQTTECSNSK) show a composition bias toward polar residues. Residues 1624–1638 (SQNTKRSSSSSNTRQ) are compositionally biased toward low complexity. Over residues 1639 to 1648 (IEINNNSKEV) the composition is skewed to polar residues. Residues 1653 to 1663 (HKNEHLEKPNK) are compositionally biased toward basic and acidic residues.

As to quaternary structure, interacts with CTTN/cortactin SH3 domain. Interacts with STRN, STRN4/zinedin and MOB4/phocein; this interactions mediate the association with the STRIPAK core complex and may regulate dendritic spine distribution of the STRIPAK complex in hippocampal neurons. Activation of glutamate receptors weakens the interaction with STRN and STRN4. As to expression, highest expression in brain. Also expressed in kidney, pancreas, lung, heart, liver, skeletal muscle and placenta.

The protein localises to the cytoplasm. The protein resides in the cell cortex. It is found in the cell projection. It localises to the dendritic spine. Its function is as follows. Regulates the dendritic spine distribution of CTTN/cortactin in hippocampal neurons, and thus controls dendritic spinogenesis and dendritic spine maintenance. Associates with the striatin-interacting phosphatase and kinase (STRIPAK) core complex to regulate dendritic spine distribution of the STRIPAK complex in hippocampal neurons. The polypeptide is Cortactin-binding protein 2 (Homo sapiens (Human)).